We begin with the raw amino-acid sequence, 340 residues long: Coproporphyrin III ferrochelatase (340 aa).

Fe-coproporphyrin III contacts are provided by Ser-52 and Tyr-121. 2 residues coordinate Fe(2+): His-177 and Glu-260.

Belongs to the ferrochelatase family.

It localises to the cytoplasm. It carries out the reaction Fe-coproporphyrin III + 2 H(+) = coproporphyrin III + Fe(2+). It participates in porphyrin-containing compound metabolism; protoheme biosynthesis. Involved in coproporphyrin-dependent heme b biosynthesis. Catalyzes the insertion of ferrous iron into coproporphyrin III to form Fe-coproporphyrin III. The chain is Coproporphyrin III ferrochelatase from Mycobacteroides abscessus (strain ATCC 19977 / DSM 44196 / CCUG 20993 / CIP 104536 / JCM 13569 / NCTC 13031 / TMC 1543 / L948) (Mycobacterium abscessus).